The chain runs to 325 residues: DNA-directed RNA polymerase subunit alpha (325 aa).

The alpha N-terminal domain (alpha-NTD) stretch occupies residues 1 to 231; it reads MQTSLLKPKI…DQLSVFAALE (231 aa). Residues 246–325 form an alpha C-terminal domain (alpha-CTD) region; the sequence is IDPILLRPVD…ENWPPAGLDK (80 aa).

It belongs to the RNA polymerase alpha chain family. In terms of assembly, homodimer. The RNAP catalytic core consists of 2 alpha, 1 beta, 1 beta' and 1 omega subunit. When a sigma factor is associated with the core the holoenzyme is formed, which can initiate transcription.

It carries out the reaction RNA(n) + a ribonucleoside 5'-triphosphate = RNA(n+1) + diphosphate. Functionally, DNA-dependent RNA polymerase catalyzes the transcription of DNA into RNA using the four ribonucleoside triphosphates as substrates. This chain is DNA-directed RNA polymerase subunit alpha, found in Paraburkholderia phytofirmans (strain DSM 17436 / LMG 22146 / PsJN) (Burkholderia phytofirmans).